The chain runs to 422 residues: Aliphatic (R)-hydroxynitrile lyase (422 aa).

7 residues coordinate Zn(2+): C63, H85, C115, C118, C121, C129, and C199.

Belongs to the zinc-containing alcohol dehydrogenase family. Homodimer. Requires Zn(2+) as cofactor.

It carries out the reaction (2R)-2-hydroxy-2-methylbutanenitrile = butan-2-one + hydrogen cyanide. Involved in the catabolism of cyanogenic glycosides. Naturally occurring substrates are the aliphatic acetone cyanohydrin and butan-2-one cyanohydrin, which are the aglycones of the cyanogenic glycosides linamarin, lotaustralin, linustatin and neolinustatin. Can use various aliphatic ketones and aldehydes as substrates, but not aromatic ketones. The chain is Aliphatic (R)-hydroxynitrile lyase from Linum usitatissimum (Flax).